The sequence spans 371 residues: Deoxyguanosinetriphosphate triphosphohydrolase-like protein (371 aa).

One can recognise an HD domain in the interval 62–200 (RITHSIEVAQ…SAISDDIAYN (139 aa)).

Belongs to the dGTPase family. Type 2 subfamily.

This chain is Deoxyguanosinetriphosphate triphosphohydrolase-like protein, found in Pelagibacter ubique (strain HTCC1062).